The following is a 336-amino-acid chain: Holliday junction branch migration complex subunit RuvB (336 aa).

Residues 4 to 184 (ADRLVAPGSI…FGIVQRLEFY (181 aa)) form a large ATPase domain (RuvB-L) region. Residues Ile-23, Arg-24, Gly-65, Lys-68, Thr-69, Thr-70, 131-133 (EDY), Arg-174, Tyr-184, and Arg-221 contribute to the ATP site. Thr-69 serves as a coordination point for Mg(2+). The interval 185–255 (QVADLQHIVS…VASQALDMLN (71 aa)) is small ATPAse domain (RuvB-S). Positions 258–336 (AEGFDYMDRK…HFGITPPQMP (79 aa)) are head domain (RuvB-H). Arg-294, Arg-313, and Arg-318 together coordinate DNA.

Belongs to the RuvB family. As to quaternary structure, homohexamer. Forms an RuvA(8)-RuvB(12)-Holliday junction (HJ) complex. HJ DNA is sandwiched between 2 RuvA tetramers; dsDNA enters through RuvA and exits via RuvB. An RuvB hexamer assembles on each DNA strand where it exits the tetramer. Each RuvB hexamer is contacted by two RuvA subunits (via domain III) on 2 adjacent RuvB subunits; this complex drives branch migration. In the full resolvosome a probable DNA-RuvA(4)-RuvB(12)-RuvC(2) complex forms which resolves the HJ.

It localises to the cytoplasm. It catalyses the reaction ATP + H2O = ADP + phosphate + H(+). The RuvA-RuvB-RuvC complex processes Holliday junction (HJ) DNA during genetic recombination and DNA repair, while the RuvA-RuvB complex plays an important role in the rescue of blocked DNA replication forks via replication fork reversal (RFR). RuvA specifically binds to HJ cruciform DNA, conferring on it an open structure. The RuvB hexamer acts as an ATP-dependent pump, pulling dsDNA into and through the RuvAB complex. RuvB forms 2 homohexamers on either side of HJ DNA bound by 1 or 2 RuvA tetramers; 4 subunits per hexamer contact DNA at a time. Coordinated motions by a converter formed by DNA-disengaged RuvB subunits stimulates ATP hydrolysis and nucleotide exchange. Immobilization of the converter enables RuvB to convert the ATP-contained energy into a lever motion, pulling 2 nucleotides of DNA out of the RuvA tetramer per ATP hydrolyzed, thus driving DNA branch migration. The RuvB motors rotate together with the DNA substrate, which together with the progressing nucleotide cycle form the mechanistic basis for DNA recombination by continuous HJ branch migration. Branch migration allows RuvC to scan DNA until it finds its consensus sequence, where it cleaves and resolves cruciform DNA. This chain is Holliday junction branch migration complex subunit RuvB, found in Cronobacter sakazakii (strain ATCC BAA-894) (Enterobacter sakazakii).